Here is a 183-residue protein sequence, read N- to C-terminus: Adenylate kinase (183 aa).

12 to 17 contributes to the ATP binding site; sequence GAGKGT. Residues 32–61 form an NMP region; the sequence is STGDLLRSEVSAGSALGQEAEAVMNRGELV. Residues Thr-33, Arg-38, 59 to 61, 86 to 89, and Gln-93 contribute to the AMP site; these read ELV and GFPR. The tract at residues 127–133 is LID; sequence ARGRADD. Arg-128 contacts ATP. The AMP site is built by Arg-130 and Arg-141. ATP is bound at residue Gly-169.

Belongs to the adenylate kinase family. As to quaternary structure, monomer.

The protein resides in the cytoplasm. The enzyme catalyses AMP + ATP = 2 ADP. The protein operates within purine metabolism; AMP biosynthesis via salvage pathway; AMP from ADP: step 1/1. Functionally, catalyzes the reversible transfer of the terminal phosphate group between ATP and AMP. Plays an important role in cellular energy homeostasis and in adenine nucleotide metabolism. This Synechococcus sp. (strain WH7803) protein is Adenylate kinase.